Here is a 105-residue protein sequence, read N- to C-terminus: U2-lycotoxin-Ls1b (105 aa).

The N-terminal stretch at 1–17 is a signal peptide; it reads MIKYVLISALLVVAVYS. Residues 18-41 constitute a propeptide that is removed on maturation; sequence FTIEDNEDALLEEAEDELDTEEER. 4 cysteine pairs are disulfide-bonded: cysteine 51/cysteine 67, cysteine 58/cysteine 97, cysteine 60/cysteine 83, and cysteine 69/cysteine 81.

The protein belongs to the neurotoxin 04 (omega-agtx) family. 01 (type I omega-agtx) subfamily. Expressed by the venom gland.

It localises to the secreted. Its function is as follows. Insecticidal to house crickets. It induces an excitatory slow-onset impact that leads to irreversible spastic paralysis. It also modifies human voltage-gated potassium channel Kv1.5/KCNA5. Most likely, it binds to the voltage-sensing domain of the channel, suggesting it does not block the pore but prevents its opening at physiological membrane potentials. The recombinant peptide binds to the channel in an irreversible manner and slows down the hKv1.5 current activation kinetics. It is not toxic to mice, when intracranially injected (at 0.5 ug/g mouse). In Lycosa singoriensis (Wolf spider), this protein is U2-lycotoxin-Ls1b.